Reading from the N-terminus, the 292-residue chain is F-box/LRR-repeat protein 15 (292 aa).

Positions 12–59 (LLDLPWEDVLVPHILSYLPLRHILSLQRVSKPFHSLVHIYLCNCRHFD) constitute an F-box domain. LRR repeat units follow at residues 134–155 (HLQN…RSLA), 160–181 (CLEA…SYLV), 186–207 (RLKS…EETA), 212–233 (DLEH…RTLA), and 238–259 (NLKS…GNLR).

It belongs to the FBXL15 family. As to quaternary structure, part of the SCF (SKP1-CUL1-F-box) E3 ubiquitin-protein ligase complex SCF(FBXL15).

Its subcellular location is the cytoplasm. The protein operates within protein modification; protein ubiquitination. Its function is as follows. Substrate recognition component of a SCF (SKP1-CUL1-F-box protein) E3 ubiquitin-protein ligase complex which mediates the ubiquitination and subsequent proteasomal degradation of target proteins. Acts as a positive regulator of the BMP signaling pathway. Required for dorsal/ventral pattern formation. The polypeptide is F-box/LRR-repeat protein 15 (fbxl15) (Xenopus laevis (African clawed frog)).